Here is a 210-residue protein sequence, read N- to C-terminus: LexA repressor (210 aa).

A DNA-binding region (H-T-H motif) is located at residues 30–50 (RVEIAREIGFKSPNAAEEHLK). Active-site for autocatalytic cleavage activity residues include serine 127 and lysine 164.

The protein belongs to the peptidase S24 family. As to quaternary structure, homodimer.

The catalysed reaction is Hydrolysis of Ala-|-Gly bond in repressor LexA.. In terms of biological role, represses a number of genes involved in the response to DNA damage (SOS response), including recA and lexA. In the presence of single-stranded DNA, RecA interacts with LexA causing an autocatalytic cleavage which disrupts the DNA-binding part of LexA, leading to derepression of the SOS regulon and eventually DNA repair. This Actinobacillus pleuropneumoniae serotype 7 (strain AP76) protein is LexA repressor.